A 200-amino-acid chain; its full sequence is Casparian strip membrane protein 1 (200 aa).

At 1 to 38 (MKSGDHAAIDVPESSAVAKGKAPLIATPREQKSGFKKG) the chain is on the cytoplasmic side. Residues 39–59 (LGIFDFLLRLGAIIAALAAAA) traverse the membrane as a helical segment. Topologically, residues 60–86 (TMGTSDETLPFFTQFFQFEASYDDLPT) are extracellular. Residues 87–107 (FMFFVIAMALIGGYLVLSLPF) traverse the membrane as a helical segment. Topologically, residues 108 to 121 (SIVTIVRPHAVAPR) are cytoplasmic. The chain crosses the membrane as a helical span at residues 122 to 142 (LLLFILDIVALTLTTAAGAAA). The Extracellular segment spans residues 143-171 (AAIVYLAHNGNPNTNWLAICQQFGDFCQE). Residues 172–192 (VSGAVVASFVTVVVLMSLVLL) form a helical membrane-spanning segment. Topologically, residues 193–200 (SGVALKKH) are cytoplasmic.

This sequence belongs to the Casparian strip membrane proteins (CASP) family. As to quaternary structure, homodimer and heterodimers.

It localises to the cell membrane. Its function is as follows. Regulates membrane-cell wall junctions and localized cell wall deposition. Required for establishment of the Casparian strip membrane domain (CSD) and the subsequent formation of Casparian strips, a cell wall modification of the root endodermis that determines an apoplastic barrier between the intraorganismal apoplasm and the extraorganismal apoplasm and prevents lateral diffusion. The sequence is that of Casparian strip membrane protein 1 from Theobroma cacao (Cacao).